Here is a 222-residue protein sequence, read N- to C-terminus: DNA ADP-ribosyl transferase (222 aa).

The 198-residue stretch at 12–209 (TLIYHITHLN…PVRVRRSWYY (198 aa)) folds into the DarT domain. NAD(+)-binding positions include 16–18 (HIT), G25, and L33. The tract at residues 38 to 56 (RPPTQQNVAYGHIQAHRAQ) is NAD(+)-binding element. The DNA-binding element occupies 47 to 53 (YGHIQAH). R54 provides a ligand contact to NAD(+). The active-site Proton acceptor is the R54. DNA-binding regions lie at residues 78–83 (RSPMLY), 148–151 (SYWA), and 154–158 (REKKQ). The segment at 119 to 160 (TDRHAAVQYVCFFHKLEHLKALDWQAIQASYWANVREKKQAE) is ADP-ribosylating turn-turn loop. The active site involves E160.

It belongs to the DarT ADP-ribosyltransferase family. Interacts with cognate antitoxin DarG (via C-terminus); this heterodimeric complex neutralizes the toxic effect of DarT by preventing ssDNA binding to DarT and consequently inactivating the toxin by direct protein-protein interactions.

It catalyses the reaction a thymidine in DNA + NAD(+) = an N-(ADP-alpha-D-ribosyl)-thymidine in DNA + nicotinamide + H(+). Toxic component of the hybrid type II/IV toxin-antitoxin (TA) system DarTG, which plays a crucial role in controlling bacterial growth and bacteriophage infection. Its toxic effect is neutralized by cognate antitoxin DarG. In case of phage infection, DarT toxin ADP-ribosylates DNA, which inhibits both viral DNA and RNA synthesis and leads to abortive infection. ADP-ribosylates ssDNA on the second thymidine of the consensus sequence 5'-TNTC-3'; the protein does not auto-modify. Has no activity on dsDNA in vitro. This leads to a decrease in DNA replication. Upon expression in E.coli inhibits cell growth, colony formation and induces the SOS response. Expression leads to bacteriostasis; however if cells grow over an hour in the presence of toxin, growth is no longer restored on antitoxin-inducing plates. In E.coli ADP-ribosylates genomic DNA (gDNA), which induces RecA expression (a marker for DNA damage). The protein is DNA ADP-ribosyl transferase of Thermus aquaticus (strain ATCC BAA-2747 / Y51MC23).